A 522-amino-acid chain; its full sequence is GMP synthase [glutamine-hydrolyzing] (522 aa).

Residues 9–204 (KILILDFGAQ…VVDICGCQML (196 aa)) enclose the Glutamine amidotransferase type-1 domain. Cys86 acts as the Nucleophile in catalysis. Active-site residues include His178 and Glu180. The GMPS ATP-PPase domain occupies 205 to 397 (WTAANIIEDQ…LGLPHAMVYR (193 aa)). 232–238 (SGGVDSS) is an ATP binding site.

As to quaternary structure, homodimer.

It carries out the reaction XMP + L-glutamine + ATP + H2O = GMP + L-glutamate + AMP + diphosphate + 2 H(+). The protein operates within purine metabolism; GMP biosynthesis; GMP from XMP (L-Gln route): step 1/1. Functionally, catalyzes the synthesis of GMP from XMP. The sequence is that of GMP synthase [glutamine-hydrolyzing] (guaA) from Xylella fastidiosa (strain 9a5c).